A 176-amino-acid chain; its full sequence is Nucleoside triphosphate/diphosphate phosphatase (176 aa).

The Proton donor role is filled by arginine 23. Mg(2+) is bound by residues asparagine 87, aspartate 103, aspartate 105, aspartate 107, aspartate 120, and glutamate 123.

The protein belongs to the Ntdp family. It depends on Mg(2+) as a cofactor.

It catalyses the reaction a ribonucleoside 5'-triphosphate + H2O = a ribonucleoside 5'-diphosphate + phosphate + H(+). The catalysed reaction is a ribonucleoside 5'-diphosphate + H2O = a ribonucleoside 5'-phosphate + phosphate + H(+). Has nucleoside phosphatase activity towards nucleoside triphosphates and nucleoside diphosphates. The polypeptide is Nucleoside triphosphate/diphosphate phosphatase (ygaC) (Bacillus subtilis (strain 168)).